A 252-amino-acid chain; its full sequence is Beta-carotene isomerase D27, chloroplastic (252 aa).

A chloroplast-targeting transit peptide spans Met-1–Ser-43.

Fe cation serves as cofactor. As to expression, highly expressed in roots. Expressed at low levels in leaves and stems.

The protein resides in the plastid. It is found in the chloroplast. It carries out the reaction all-trans-beta-carotene = 9-cis-beta-carotene. In terms of biological role, involved in strigolactones biosynthesis by catalyzing the isomerization of the C9-C10 double bond in all-trans-beta-carotene leading to 9-cis-beta-carotene and providing the substrate for CCD7. Strigolactones are hormones that inhibit tillering and shoot branching through the MAX-dependent pathway, contribute to the regulation of shoot architectural response to phosphate-limiting conditions and function as rhizosphere signals that stimulate hyphal branching of arbuscular mycorrhizal fungi and trigger seed germination of root parasitic weeds. The protein is Beta-carotene isomerase D27, chloroplastic of Medicago truncatula (Barrel medic).